A 207-amino-acid polypeptide reads, in one-letter code: Probable GTP-binding protein EngB (207 aa).

An EngB-type G domain is found at 22-193; the sequence is RVPEIVFAGR…LAHFDHYLSG (172 aa). Residues 30–37, 57–61, 75–78, 142–145, and 172–174 contribute to the GTP site; these read GRSNVGKS, GKTRL, DIPG, TKDD, and YSS. Residues serine 37 and threonine 59 each contribute to the Mg(2+) site.

Belongs to the TRAFAC class TrmE-Era-EngA-EngB-Septin-like GTPase superfamily. EngB GTPase family. Mg(2+) serves as cofactor.

Functionally, necessary for normal cell division and for the maintenance of normal septation. The polypeptide is Probable GTP-binding protein EngB (Chlorobium luteolum (strain DSM 273 / BCRC 81028 / 2530) (Pelodictyon luteolum)).